A 424-amino-acid chain; its full sequence is Elongation factor 1-alpha (424 aa).

The region spanning 5–223 (KPHLNLITIG…DAFKVPEKPI (219 aa)) is the tr-type G domain. A G1 region spans residues 14–21 (GHVDHGKS). 14–21 (GHVDHGKS) serves as a coordination point for GTP. Serine 21 is a binding site for Mg(2+). The segment at 70–74 (GVTID) is G2. Residues 91 to 94 (DAPG) are G3. GTP is bound by residues 91–95 (DAPGH) and 148–151 (NKMD). The interval 148–151 (NKMD) is G4. The G5 stretch occupies residues 187 to 189 (SGY).

Belongs to the TRAFAC class translation factor GTPase superfamily. Classic translation factor GTPase family. EF-Tu/EF-1A subfamily.

It localises to the cytoplasm. The catalysed reaction is GTP + H2O = GDP + phosphate + H(+). GTP hydrolase that promotes the GTP-dependent binding of aminoacyl-tRNA to the A-site of ribosomes during protein biosynthesis. The protein is Elongation factor 1-alpha of Thermoplasma volcanium (strain ATCC 51530 / DSM 4299 / JCM 9571 / NBRC 15438 / GSS1).